The sequence spans 122 residues: Holo-[acyl-carrier-protein] synthase (122 aa).

2 residues coordinate Mg(2+): Asp-8 and Glu-57.

The protein belongs to the P-Pant transferase superfamily. AcpS family. Mg(2+) is required as a cofactor.

It localises to the cytoplasm. The enzyme catalyses apo-[ACP] + CoA = holo-[ACP] + adenosine 3',5'-bisphosphate + H(+). Functionally, transfers the 4'-phosphopantetheine moiety from coenzyme A to a Ser of acyl-carrier-protein. The polypeptide is Holo-[acyl-carrier-protein] synthase (Exiguobacterium sp. (strain ATCC BAA-1283 / AT1b)).